A 173-amino-acid chain; its full sequence is Coordinator of PRMT5 and differentiation stimulator (173 aa).

N-acetylmethionine is present on methionine 1. Residues 1-70 form a disordered region; the sequence is MDPQAATGRG…EGPSSEEEGF (70 aa). Phosphoserine occurs at positions 64 and 65.

Interacts with PRMT5. Interacts with histone H4; specifically interacts with the N-terminus of histone H4 but not with histone H3. Interacts with CBFB. Found in a complex with PRMT5, RUNX1 and CBFB.

Its subcellular location is the nucleus. Functionally, histone-binding protein required for histone H4 methyltransferase activity of PRMT5. Specifically required for histone H4 'Arg-3' methylation mediated by PRMT5, but not histone H3 'Arg-8' methylation, suggesting that it modulates the substrate specificity of PRMT5. Specifically interacts with the N-terminus of histone H4 but not with histone H3, suggesting that it acts by promoting the association between histone H4 and PRMT5. Involved in CCNE1 promoter repression. Plays a role in muscle cell differentiation by modulating the recruitment of PRMT5 to the promoter of genes involved in the coordination between cell cycle exit and muscle differentiation. This chain is Coordinator of PRMT5 and differentiation stimulator (Coprs), found in Mus musculus (Mouse).